The primary structure comprises 161 residues: M-phase phosphoprotein 6 (161 aa).

Glycyl lysine isopeptide (Lys-Gly) (interchain with G-Cter in SUMO2) cross-links involve residues Lys-37 and Lys-86. Ser-111 is modified (phosphoserine). A Nuclear localization signal motif is present at residues 117-134 (RRYETLVGTIGKKFVKKR). Glycyl lysine isopeptide (Lys-Gly) (interchain with G-Cter in SUMO2) cross-links involve residues Lys-128, Lys-151, and Lys-154.

It belongs to the MPP6 family. In terms of assembly, associates with the RNA exosome complex, mediated by EXOSC3. Interacts with ARHGAP18. Interacts with exosome cofactors EXOSC10 and MTREX. Post-translationally, phosphorylated in M (mitotic) phase.

The protein localises to the nucleus. It localises to the nucleolus. It is found in the cytoplasm. Its function is as follows. RNA-binding protein that associates with the RNA exosome complex. Involved in the 3'-processing of the 7S pre-RNA to the mature 5.8S rRNA and plays a role in recruiting the RNA exosome complex to pre-rRNA; this function may include C1D. The sequence is that of M-phase phosphoprotein 6 from Mus musculus (Mouse).